A 324-amino-acid polypeptide reads, in one-letter code: Cuticle collagen lon-3 (324 aa).

Residues 1 to 30 (MSVTTATSGALIFSGASLLVSLFAAASIYS) form the signal peptide. Positions 119–324 (VENTCPTGPD…AWRRKHKRVY (206 aa)) are disordered. Triple-helical region stretches follow at residues 129-152 (GEEGEQGPDGQDGVDGVPGFDGQD), 170-229 (GLPG…KGDD), and 235-294 (GRQG…SGLP). 5 stretches are compositionally biased toward low complexity: residues 136–151 (PDGQDGVDGVPGFDGQ), 168–181 (PQGLPGPQGSQGAP), 210–223 (PTGAPGDDGAPGAS), 235–246 (GRQGQRGQPGEQ), and 261–273 (EGPPGVEGEVGVP). A compositionally biased stretch (basic and acidic residues) spans 296–311 (KDAEYCKCPTRDDGGN). Over residues 314–324 (RAWRRKHKRVY) the composition is skewed to basic residues.

This sequence belongs to the cuticular collagen family. As to quaternary structure, collagen polypeptide chains are complexed within the cuticle by disulfide bonds and other types of covalent cross-links.

Nematode cuticles are composed largely of collagen-like proteins. The cuticle functions both as an exoskeleton and as a barrier to protect the worm from its environment. Dose-dependent regulator of body length and shape. This chain is Cuticle collagen lon-3 (lon-3), found in Caenorhabditis elegans.